A 212-amino-acid chain; its full sequence is Interleukin-6 (212 aa).

Positions 1-29 are cleaved as a signal peptide; that stretch reads MTSFSTSAFRPVAFSLGLLLVMPAAFPAP. Cys-72 and Cys-78 are oxidised to a cystine. Asn-73 carries an N-linked (GlcNAc...) asparagine glycan. Position 81 is a phosphoserine (Ser-81). An intrachain disulfide couples Cys-101 to Cys-111. N-linked (GlcNAc...) asparagine glycans are attached at residues Asn-160 and Asn-172.

It belongs to the IL-6 superfamily. As to quaternary structure, component of a hexamer of two molecules each of IL6, IL6R and IL6ST; first binds to IL6R to associate with the signaling subunit IL6ST. Interacts with IL6R (via the N-terminal ectodomain); this interaction may be affected by IL6R-binding with SORL1, hence decreasing IL6 cis signaling. Interacts with SORL1 (via the N-terminal ectodomain); this interaction leads to IL6 internalization and lysosomal degradation. May form a trimeric complex with the soluble SORL1 ectodomain and soluble IL6R receptor; this interaction might stabilize circulating IL6, hence promoting IL6 trans signaling.

Its subcellular location is the secreted. Its function is as follows. Cytokine with a wide variety of biological functions in immunity, tissue regeneration, and metabolism. Binds to IL6R, then the complex associates to the signaling subunit IL6ST/gp130 to trigger the intracellular IL6-signaling pathway. The interaction with the membrane-bound IL6R and IL6ST stimulates 'classic signaling', whereas the binding of IL6 and soluble IL6R to IL6ST stimulates 'trans-signaling'. Alternatively, 'cluster signaling' occurs when membrane-bound IL6:IL6R complexes on transmitter cells activate IL6ST receptors on neighboring receiver cells. Functionally, IL6 is a potent inducer of the acute phase response. Rapid production of IL6 contributes to host defense during infection and tissue injury, but excessive IL6 synthesis is involved in disease pathology. In the innate immune response, is synthesized by myeloid cells, such as macrophages and dendritic cells, upon recognition of pathogens through toll-like receptors (TLRs) at the site of infection or tissue injury. In the adaptive immune response, is required for the differentiation of B cells into immunoglobulin-secreting cells. Plays a major role in the differentiation of CD4(+) T cell subsets. Essential factor for the development of T follicular helper (Tfh) cells that are required for the induction of germinal-center formation. Required to drive naive CD4(+) T cells to the Th17 lineage. Also required for proliferation of myeloma cells and the survival of plasmablast cells. Acts as an essential factor in bone homeostasis and on vessels directly or indirectly by induction of VEGF, resulting in increased angiogenesis activity and vascular permeability. Induces, through 'trans-signaling' and synergistically with IL1B and TNF, the production of VEGF. Involved in metabolic controls, is discharged into the bloodstream after muscle contraction increasing lipolysis and improving insulin resistance. 'Trans-signaling' in central nervous system also regulates energy and glucose homeostasis. Mediates, through GLP-1, crosstalk between insulin-sensitive tissues, intestinal L cells and pancreatic islets to adapt to changes in insulin demand. Also acts as a myokine. Plays a protective role during liver injury, being required for maintenance of tissue regeneration. Also has a pivotal role in iron metabolism by regulating HAMP/hepcidin expression upon inflammation or bacterial infection. Through activation of IL6ST-YAP-NOTCH pathway, induces inflammation-induced epithelial regeneration. This Saimiri sciureus (Common squirrel monkey) protein is Interleukin-6 (IL6).